We begin with the raw amino-acid sequence, 200 residues long: Synaptobrevin homolog YKT6 (200 aa).

The region spanning 7-129 (GVFRSGGEKA…LKMKQLDTYI (123 aa)) is the Longin domain. Residues 140–200 (AIMKVQQELD…KKSNSCCIIM (61 aa)) form the v-SNARE coiled-coil homology domain. Threonine 158 carries the post-translational modification Phosphothreonine. Cysteine 196 carries S-palmitoyl cysteine lipidation. Cysteine 197 is subject to Cysteine methyl ester. Cysteine 197 carries S-farnesyl cysteine lipidation. A propeptide spans 198–200 (IIM) (removed in mature form).

Belongs to the synaptobrevin family.

The protein resides in the cell membrane. This is Synaptobrevin homolog YKT6 (YKT6) from Saccharomyces cerevisiae (strain ATCC 204508 / S288c) (Baker's yeast).